Consider the following 256-residue polypeptide: Putative transposase for insertion sequence element IS112 (256 aa).

Belongs to the transposase 11 family.

In terms of biological role, involved in the transposition of the insertion sequence IS112 which inactivates the SalI restriction-modification system. In Streptomyces albus G, this protein is Putative transposase for insertion sequence element IS112.